The primary structure comprises 518 residues: ETHYLENE INSENSITIVE 3-like 2 protein (518 aa).

A coiled-coil region spans residues 37–73; sequence DDLSSDEEMEIEELEKKIWRDKQRLKRLKEMAKNGLG. Positions 450 to 518 are disordered; the sequence is FNHPNDLYRP…GQELPTSWIQ (69 aa). Polar residues-rich tracts occupy residues 475–484 and 500–518; these read PSPSTLNQNL and GTENNLHNQGQELPTSWIQ.

This sequence belongs to the EIN3 family. Acts as a homodimer to bind the primary ethylene response element.

It is found in the nucleus. Functionally, probable transcription factor acting as a positive regulator in the ethylene response pathway. Could bind the primary ethylene response element present in the ETHYLENE-RESPONSE-FACTOR1 promoter. The polypeptide is ETHYLENE INSENSITIVE 3-like 2 protein (EIL2) (Arabidopsis thaliana (Mouse-ear cress)).